Reading from the N-terminus, the 79-residue chain is MSNKGQLLQDPFLNALRKEHVPVSIYLVNGIKLQGNIESFDQYVVLLRNTVTQMVYKHAISTVVPARPVNFHPDAEAAS.

The Sm domain maps to 10 to 69; sequence DPFLNALRKEHVPVSIYLVNGIKLQGNIESFDQYVVLLRNTVTQMVYKHAISTVVPARPV.

This sequence belongs to the Hfq family. Homohexamer.

Its function is as follows. RNA chaperone that binds small regulatory RNA (sRNAs) and mRNAs to facilitate mRNA translational regulation in response to envelope stress, environmental stress and changes in metabolite concentrations. Also binds with high specificity to tRNAs. This Burkholderia mallei (strain ATCC 23344) protein is RNA-binding protein Hfq.